The following is a 1374-amino-acid chain: DNA-directed RNA polymerase subunit beta (1374 aa).

The protein belongs to the RNA polymerase beta chain family. As to quaternary structure, the RNAP catalytic core consists of 2 alpha, 1 beta, 1 beta' and 1 omega subunit. When a sigma factor is associated with the core the holoenzyme is formed, which can initiate transcription.

The catalysed reaction is RNA(n) + a ribonucleoside 5'-triphosphate = RNA(n+1) + diphosphate. In terms of biological role, DNA-dependent RNA polymerase catalyzes the transcription of DNA into RNA using the four ribonucleoside triphosphates as substrates. The protein is DNA-directed RNA polymerase subunit beta of Rhodopseudomonas palustris (strain TIE-1).